The chain runs to 353 residues: UPF0283 membrane protein YcjF (353 aa).

Helical transmembrane passes span Met70–Thr90, Val100–Val120, and Glu213–Trp233.

This sequence belongs to the UPF0283 family.

It is found in the cell inner membrane. The chain is UPF0283 membrane protein YcjF from Shigella flexneri serotype 5b (strain 8401).